A 735-amino-acid polypeptide reads, in one-letter code: Glycogen [starch] synthase, muscle (735 aa).

S8 is subject to Phosphoserine; by AMPK and PKA. Phosphoserine is present on S11. K39 serves as a coordination point for UDP. UDP-alpha-D-glucose contacts are provided by H205 and R211. Residues H291, E292, Q294, H297, and K301 each contribute to the alpha-D-glucose 6-phosphate site. R331 provides a ligand contact to UDP. R331 serves as a coordination point for UDP-alpha-D-glucose. Position 412 is a phosphoserine (S412). H501 contacts alpha-D-glucose 6-phosphate. UDP-alpha-D-glucose is bound by residues E510, W512, and G513. A UDP-binding site is contributed by T515. Positions 582 and 586 each coordinate alpha-D-glucose 6-phosphate. The segment at 629–735 is disordered; that stretch reads DATQGYRYPR…PASSLGEERN (107 aa). At S641 the chain carries Phosphoserine; by DYRK2, GSK3-alpha, GSK3-beta and PASK. Phosphoserine; by GSK3-alpha and GSK3-beta occurs at positions 645 and 649. S652 carries the post-translational modification Phosphoserine. A Phosphoserine; by GSK3-alpha and GSK3-beta modification is found at S653. S657 carries the phosphoserine; by CK2 modification. The segment covering 658-681 has biased composition (acidic residues); that stretch reads EDEEEPRDGLPEEDGERYDEDEEA. Residues 682–695 are compositionally biased toward basic and acidic residues; the sequence is AKDRRNIRAPEWPR. S698 is modified (phosphoserine). Positions 698–735 are enriched in low complexity; that stretch reads SCTSSSGGSKRSNSVDTSSLSTPSEPLSPASSLGEERN. The residue at position 700 (T700) is a Phosphothreonine. Phosphoserine occurs at positions 709 and 711. T719 bears the Phosphothreonine mark. Phosphoserine is present on residues S725 and S729.

It belongs to the glycosyltransferase 3 family. In terms of assembly, part of the GYS1-GYG1 complex, a heterooctamer composed of a tetramer of GYS1 and 2 dimers of GYG1, where each GYS1 protomer binds to one GYG1 subunit (via GYG1 C-terminus); the GYS1 tetramer may dissociate from GYG1 dimers to continue glycogen polymerization on its own. Phosphorylation at Ser-8 is required for modification of Ser-11 by casein kinase I. In terms of processing, phosphorylated at Ser-641 by PASK, leading to inactivation; phosphorylation by PASK is inhibited by glycogen. Dephosphorylation at Ser-641 and Ser-645 by PP1 activates the enzyme. Phosphorylation at Ser-8 by AMPK inactivates the enzyme activity. Phosphorylated at Ser-641 by DYRK2, leading to inactivation. Primed phosphorylation at Ser-657 (site 5) by CSNK2A1 and CSNK2A2 is required for inhibitory phosphorylation at Ser-641 (site 3a), Ser-645 (site 3b), Ser-649 (site 3c) and Ser-653 (site 4) by GSK3A and GSK3B.

It catalyses the reaction [(1-&gt;4)-alpha-D-glucosyl](n) + UDP-alpha-D-glucose = [(1-&gt;4)-alpha-D-glucosyl](n+1) + UDP + H(+). Its pathway is glycan biosynthesis; glycogen biosynthesis. With respect to regulation, allosteric activation by glucose-6-phosphate. Phosphorylation reduces the activity towards UDP-glucose. When in the non-phosphorylated state, glycogen synthase does not require glucose-6-phosphate as an allosteric activator; when phosphorylated it does. Functionally, glycogen synthase participates in the glycogen biosynthetic process along with glycogenin and glycogen branching enzyme. Extends the primer composed of a few glucose units formed by glycogenin by adding new glucose units to it. In this context, glycogen synthase transfers the glycosyl residue from UDP-Glc to the non-reducing end of alpha-1,4-glucan. This Oryctolagus cuniculus (Rabbit) protein is Glycogen [starch] synthase, muscle.